The primary structure comprises 221 residues: MKKLLYISVNTKPEGMSASKTVGREFVDRFVQNYPEYQLIEHDICNEYIPELDHRFLNDNGDIVSGNDYNLLSDNDKKIVDRINDLCNEFVSADVYVIAYPMWSSLFPPRLKMYIDCIVQNGKTIKISEDESSGLLSDKERSVLCIQSSGGVYPKIISWKINHGINYLHDIFRHLGIKKFEKLLVEGVDVQDIGKEKAVEKAFDEIDELIDKMQVRDFVKQ.

FMN-binding positions include 17-19 and 148-151; these read SAS and SSGG.

This sequence belongs to the azoreductase type 1 family. In terms of assembly, homodimer. FMN serves as cofactor.

The catalysed reaction is 2 a quinone + NADH + H(+) = 2 a 1,4-benzosemiquinone + NAD(+). It catalyses the reaction N,N-dimethyl-1,4-phenylenediamine + anthranilate + 2 NAD(+) = 2-(4-dimethylaminophenyl)diazenylbenzoate + 2 NADH + 2 H(+). Functionally, quinone reductase that provides resistance to thiol-specific stress caused by electrophilic quinones. In terms of biological role, also exhibits azoreductase activity. Catalyzes the reductive cleavage of the azo bond in aromatic azo compounds to the corresponding amines. The sequence is that of FMN-dependent NADH:quinone oxidoreductase 1 from Clostridium acetobutylicum (strain ATCC 824 / DSM 792 / JCM 1419 / IAM 19013 / LMG 5710 / NBRC 13948 / NRRL B-527 / VKM B-1787 / 2291 / W).